We begin with the raw amino-acid sequence, 437 residues long: MKLSGSSALLLLGFGLLGHASPLVHVQGKNCTVKPLGHGQDDVPNILHAVEKCGQTPGGRISLPAPYTYRINQRMTTHLESSTLEVGGMLLFSDDITYWVNNSYRIDFQNQSTAWRITGHDYVVDGGPERGGIDGNGQLWYTWAKGGSNVFGRPMPLHVLNSTRAVLRNIAIRQPQFWAVLVESSSHVELDNFYVNATNSDPNATEDTVWIQNTDGIDTYRSDHVTITNWVYEGGDDAVAFKPNSTNIHVENVTVYGGPGIAFGSLGQYPDRYDIVENITVKNANFQPSSQRAMNSGIYFKSWIGVNFGVPPNGGGNGHGYVRNVTVEDITFKDVQLPIYIDTCLSYLFDQNVTQYCDTSTFRFDDLHFRNISGNGLATPTNYTGRNITFAVSMICSKEAPCTDITFEDVDIKLPESYSGKSVLCENAGVQGLECNS.

Residues 1–20 (MKLSGSSALLLLGFGLLGHA) form the signal peptide. N-linked (GlcNAc...) asparagine glycans are attached at residues Asn-30, Asn-101, Asn-110, Asn-161, Asn-196, and Asn-203. Residues 222 to 243 (SDHVTITNWVYEGGDDAVAFKP) form a PbH1 1 repeat. Asp-236 functions as the Proton donor in the catalytic mechanism. Residues Asn-244, Asn-252, Asn-278, Asn-324, Asn-352, Asn-371, Asn-382, and Asn-387 are each glycosylated (N-linked (GlcNAc...) asparagine). 3 PbH1 repeats span residues 245–265 (STNI…AFGS), 276–302 (VENI…YFKS), and 322–343 (VRNV…YIDT). An intrachain disulfide couples Cys-396 to Cys-402.

It belongs to the glycosyl hydrolase 28 family.

The protein localises to the secreted. The enzyme catalyses [(1-&gt;4)-alpha-D-galacturonosyl](n) + H2O = alpha-D-galacturonate + [(1-&gt;4)-alpha-D-galacturonosyl](n-1). Specific in hydrolyzing the terminal glycosidic bond of polygalacturonic acid and oligogalacturonates. The protein is Putative galacturan 1,4-alpha-galacturonidase A (rgxA) of Aspergillus flavus (strain ATCC 200026 / FGSC A1120 / IAM 13836 / NRRL 3357 / JCM 12722 / SRRC 167).